The chain runs to 324 residues: NADH-ubiquinone oxidoreductase chain 1 (324 aa).

The next 8 membrane-spanning stretches (helical) occupy residues 9 to 29 (LINP…LTLI), 75 to 95 (FLFL…WAPM), 106 to 126 (LGIL…LGSG), 146 to 166 (ISYE…SGGY), 177 to 197 (SIWL…STLA), 228 to 248 (LFFL…AVLF), 259 to 279 (ELTT…FLWV), and 299 to 319 (FLPL…ALAG).

Belongs to the complex I subunit 1 family.

It localises to the mitochondrion inner membrane. The catalysed reaction is a ubiquinone + NADH + 5 H(+)(in) = a ubiquinol + NAD(+) + 4 H(+)(out). Functionally, core subunit of the mitochondrial membrane respiratory chain NADH dehydrogenase (Complex I) that is believed to belong to the minimal assembly required for catalysis. Complex I functions in the transfer of electrons from NADH to the respiratory chain. The immediate electron acceptor for the enzyme is believed to be ubiquinone. The polypeptide is NADH-ubiquinone oxidoreductase chain 1 (MT-ND1) (Cyprinus carpio (Common carp)).